Reading from the N-terminus, the 311-residue chain is Pyrimidine-specific ribonucleoside hydrolase RihA (311 aa).

His240 is a catalytic residue.

It belongs to the IUNH family. RihA subfamily.

Its function is as follows. Hydrolyzes with equal efficiency cytidine or uridine to ribose and cytosine or uracil, respectively. The polypeptide is Pyrimidine-specific ribonucleoside hydrolase RihA (Escherichia coli O139:H28 (strain E24377A / ETEC)).